Consider the following 325-residue polypeptide: Tetraacyldisaccharide 4'-kinase (325 aa).

54–61 (SVGGTGKT) is an ATP binding site.

Belongs to the LpxK family.

It catalyses the reaction a lipid A disaccharide + ATP = a lipid IVA + ADP + H(+). The protein operates within glycolipid biosynthesis; lipid IV(A) biosynthesis; lipid IV(A) from (3R)-3-hydroxytetradecanoyl-[acyl-carrier-protein] and UDP-N-acetyl-alpha-D-glucosamine: step 6/6. Transfers the gamma-phosphate of ATP to the 4'-position of a tetraacyldisaccharide 1-phosphate intermediate (termed DS-1-P) to form tetraacyldisaccharide 1,4'-bis-phosphate (lipid IVA). In Rickettsia akari (strain Hartford), this protein is Tetraacyldisaccharide 4'-kinase.